The following is a 174-amino-acid chain: Large ribosomal subunit protein uL10 (174 aa).

Belongs to the universal ribosomal protein uL10 family. In terms of assembly, part of the ribosomal stalk of the 50S ribosomal subunit. The N-terminus interacts with L11 and the large rRNA to form the base of the stalk. The C-terminus forms an elongated spine to which L12 dimers bind in a sequential fashion forming a multimeric L10(L12)X complex.

In terms of biological role, forms part of the ribosomal stalk, playing a central role in the interaction of the ribosome with GTP-bound translation factors. The protein is Large ribosomal subunit protein uL10 of Verminephrobacter eiseniae (strain EF01-2).